The following is a 349-amino-acid chain: tRNA pseudouridine synthase D (349 aa).

Phe27 is a binding site for substrate. The active-site Nucleophile is the Asp80. Asn129 serves as a coordination point for substrate. Positions 155–303 (GVPNYFGAQR…VEAARRAMLL (149 aa)) constitute a TRUD domain. Phe329 is a binding site for substrate.

Belongs to the pseudouridine synthase TruD family.

The enzyme catalyses uridine(13) in tRNA = pseudouridine(13) in tRNA. Its function is as follows. Responsible for synthesis of pseudouridine from uracil-13 in transfer RNAs. The polypeptide is tRNA pseudouridine synthase D (Escherichia coli O17:K52:H18 (strain UMN026 / ExPEC)).